A 236-amino-acid polypeptide reads, in one-letter code: MSVHIGAKTGEIAERILLPGDPLRAKYIAETFLEGAVCYNEVRGMLGFTGTYKGERISVQGTGMGVPSISIYVNELIQSYGVKTLIRVGTCGAIQPDVRVRDVILAMSASTDSNMNRLIFRGRDYAPTADFHLLRTAYEVGVEKGLALKVGNVFTADMFYNDEPNWETWARYGVLAVEMETAALYTLAAKFGCRALSVLTVSDHILTGEETTAEERQMTFNEMIEVALEAAIRNGA.

H4 is an a purine D-ribonucleoside binding site. Phosphate contacts are provided by residues G20, R24, R43, and 87–90; that span reads RVGT. Residues 178–180 and 202–203 each bind a purine D-ribonucleoside; these read EME and SD. Catalysis depends on D203, which acts as the Proton donor.

This sequence belongs to the PNP/UDP phosphorylase family. Homohexamer; trimer of homodimers.

The catalysed reaction is a purine D-ribonucleoside + phosphate = a purine nucleobase + alpha-D-ribose 1-phosphate. It carries out the reaction a purine 2'-deoxy-D-ribonucleoside + phosphate = a purine nucleobase + 2-deoxy-alpha-D-ribose 1-phosphate. Its function is as follows. Catalyzes the reversible phosphorolytic breakdown of the N-glycosidic bond in the beta-(deoxy)ribonucleoside molecules, with the formation of the corresponding free purine bases and pentose-1-phosphate. The protein is Purine nucleoside phosphorylase DeoD-type of Geobacillus kaustophilus (strain HTA426).